A 357-amino-acid polypeptide reads, in one-letter code: Glutamine synthetase root isozyme A (357 aa).

The 81-residue stretch at 19-99 (IIAEYIWVGG…VICDVYTPAG (81 aa)) folds into the GS beta-grasp domain. A GS catalytic domain is found at 106–357 (KRYNAAKIFS…AETTILWKKP (252 aa)).

Belongs to the glutamine synthetase family. Homooctamer.

The protein resides in the cytoplasm. The enzyme catalyses L-glutamate + NH4(+) + ATP = L-glutamine + ADP + phosphate + H(+). The chain is Glutamine synthetase root isozyme A (GS3A) from Pisum sativum (Garden pea).